We begin with the raw amino-acid sequence, 175 residues long: COMPASS component SDC1 (175 aa).

The segment covering 1–12 has biased composition (polar residues); sequence MNESENSPQHNE. The segment at 1–45 is disordered; that stretch reads MNESENSPQHNEVTVPMVEDTSSNADIPMEQIQREDNKNYDKHDN. Over residues 32-45 the composition is skewed to basic and acidic residues; it reads IQREDNKNYDKHDN. The DPY-30 stretch occupies residues 121-162; that stretch reads QTRKYLNTNVTPHLLAGMRLIAVQQPEDPLRVLGEYLIEQSN.

It belongs to the dpy-30 family. In terms of assembly, component of the Set1C/COMPASS complex which consists of SET1(2), BRE2(2), SPP1(2), SDC1(1), SHG1(1), SWD1(1), SWD2(1), and SWD3(1). Interacts directly with BRE2.

It localises to the nucleus. Its function is as follows. Component of the Set1C/COMPASS complex that specifically mono-, di- and trimethylates histone H3 to form H3K4me1/2/3, which subsequently plays a role in telomere length maintenance and transcription elongation regulation. COMPASS recognizes ubiquitinated H2B on one face of the nucleosome which stimulates the methylation of H3 on the opposing face. This chain is COMPASS component SDC1, found in Saccharomyces cerevisiae (strain ATCC 204508 / S288c) (Baker's yeast).